Consider the following 173-residue polypeptide: Large ribosomal subunit protein uL16 (173 aa).

It belongs to the universal ribosomal protein uL16 family.

This chain is Large ribosomal subunit protein uL16, found in Methanosarcina mazei (strain ATCC BAA-159 / DSM 3647 / Goe1 / Go1 / JCM 11833 / OCM 88) (Methanosarcina frisia).